Consider the following 286-residue polypeptide: uncharacterized protein (286 aa).

The protein belongs to the chlamydial CPn_0389/CT_041/TC_0311 family.

This is an uncharacterized protein from Chlamydia muridarum (strain MoPn / Nigg).